The following is a 663-amino-acid chain: UvrABC system protein B (663 aa).

In terms of domain architecture, Helicase ATP-binding spans aspartate 31–arginine 418. Glycine 44–threonine 51 provides a ligand contact to ATP. A Beta-hairpin motif is present at residues tyrosine 97–valine 120. A Helicase C-terminal domain is found at glutamine 435–isoleucine 601. Residues glutamine 627–isoleucine 662 enclose the UVR domain.

This sequence belongs to the UvrB family. In terms of assembly, forms a heterotetramer with UvrA during the search for lesions. Interacts with UvrC in an incision complex.

The protein localises to the cytoplasm. The UvrABC repair system catalyzes the recognition and processing of DNA lesions. A damage recognition complex composed of 2 UvrA and 2 UvrB subunits scans DNA for abnormalities. Upon binding of the UvrA(2)B(2) complex to a putative damaged site, the DNA wraps around one UvrB monomer. DNA wrap is dependent on ATP binding by UvrB and probably causes local melting of the DNA helix, facilitating insertion of UvrB beta-hairpin between the DNA strands. Then UvrB probes one DNA strand for the presence of a lesion. If a lesion is found the UvrA subunits dissociate and the UvrB-DNA preincision complex is formed. This complex is subsequently bound by UvrC and the second UvrB is released. If no lesion is found, the DNA wraps around the other UvrB subunit that will check the other stand for damage. The polypeptide is UvrABC system protein B (Streptococcus agalactiae serotype III (strain NEM316)).